Here is a 146-residue protein sequence, read N- to C-terminus: Vascular endothelial growth factor isoform GtVF (146 aa).

An N-terminal signal peptide occupies residues 1 to 24 (MAAYLLAVAILFCIQGWPSGTVQG). At Gln25 the chain carries Pyrrolidone carboxylic acid. Disulfide bonds link Cys38–Cys80, Cys69–Cys115, and Cys73–Cys117. The tract at residues 116-146 (ECRPRSRSGVDSGKRKRNPEEGEPRAKFPFV) is disordered. Residues 133 to 146 (NPEEGEPRAKFPFV) are compositionally biased toward basic and acidic residues.

This sequence belongs to the PDGF/VEGF growth factor family. Snake venom VEGF subfamily. As to quaternary structure, homodimer; disulfide-linked. Expressed by the venom gland.

The protein resides in the secreted. Its function is as follows. Snake venom VEGFs that may contribute to venom dispersion and prey subjugation by inducing vascular permeability and hypotension. This protein induces an increase in capillary permeability after intradermal injection, in a VEGFR-2 (KDR) dependent manner. In addition, it provokes a drastic hypotensive effect after intravenous injection. The hypotension is mediated by nitric oxide (NO), which is produced by VEGF-activated endothelium NO synthase. Also induces angiogenesis in vitro. Unlike other crotalid VEGFs, this protein probably interacts with VEGF receptor-2 (KDR). The sequence is that of Vascular endothelial growth factor isoform GtVF from Gloydius tsushimaensis (Tsushima Island pitviper).